Reading from the N-terminus, the 388-residue chain is Arrestin-C (388 aa).

It belongs to the arrestin family. Homodimer; disulfide-linked in response to retinal illumination. Interacts with CXCR4; the interaction is dependent on the C-terminal phosphorylation of CXCR4 and modulates the calcium ion mobilization activity of CXCR4. Interacts with GPR84. Inner and outer segments, and the inner plexiform regions of the retina.

Its subcellular location is the photoreceptor inner segment. The protein localises to the cell projection. It localises to the cilium. It is found in the photoreceptor outer segment. Functionally, may play a role in an as yet undefined retina-specific signal transduction. Could bind to photoactivated-phosphorylated red/green opsins. This chain is Arrestin-C (ARR3), found in Homo sapiens (Human).